The sequence spans 945 residues: Isoleucine--tRNA ligase (945 aa).

The short motif at P66–H76 is the 'HIGH' region element. Residue E581 coordinates L-isoleucyl-5'-AMP. The short motif at K622 to S626 is the 'KMSKS' region element. K625 serves as a coordination point for ATP. Residues C908, C911, C928, and C931 each coordinate Zn(2+).

It belongs to the class-I aminoacyl-tRNA synthetase family. IleS type 1 subfamily. In terms of assembly, monomer. The cofactor is Zn(2+).

The protein localises to the cytoplasm. The enzyme catalyses tRNA(Ile) + L-isoleucine + ATP = L-isoleucyl-tRNA(Ile) + AMP + diphosphate. In terms of biological role, catalyzes the attachment of isoleucine to tRNA(Ile). As IleRS can inadvertently accommodate and process structurally similar amino acids such as valine, to avoid such errors it has two additional distinct tRNA(Ile)-dependent editing activities. One activity is designated as 'pretransfer' editing and involves the hydrolysis of activated Val-AMP. The other activity is designated 'posttransfer' editing and involves deacylation of mischarged Val-tRNA(Ile). The sequence is that of Isoleucine--tRNA ligase from Burkholderia orbicola (strain MC0-3).